A 210-amino-acid chain; its full sequence is Ribosomal RNA small subunit methyltransferase G (210 aa).

S-adenosyl-L-methionine-binding positions include Gly76, Leu81, 127-128 (VE), and Arg142.

This sequence belongs to the methyltransferase superfamily. RNA methyltransferase RsmG family.

Its subcellular location is the cytoplasm. It carries out the reaction guanosine(527) in 16S rRNA + S-adenosyl-L-methionine = N(7)-methylguanosine(527) in 16S rRNA + S-adenosyl-L-homocysteine. Functionally, specifically methylates the N7 position of guanine in position 527 of 16S rRNA. The sequence is that of Ribosomal RNA small subunit methyltransferase G from Vibrio atlanticus (strain LGP32) (Vibrio splendidus (strain Mel32)).